We begin with the raw amino-acid sequence, 306 residues long: Lipoyl synthase (306 aa).

[4Fe-4S] cluster-binding residues include C55, C60, C66, C81, C85, C88, and S294. The Radical SAM core domain maps to 67 to 283 (WNHRTATFLL…RAYALARGFR (217 aa)).

Belongs to the radical SAM superfamily. Lipoyl synthase family. [4Fe-4S] cluster serves as cofactor.

It is found in the cytoplasm. It carries out the reaction [[Fe-S] cluster scaffold protein carrying a second [4Fe-4S](2+) cluster] + N(6)-octanoyl-L-lysyl-[protein] + 2 oxidized [2Fe-2S]-[ferredoxin] + 2 S-adenosyl-L-methionine + 4 H(+) = [[Fe-S] cluster scaffold protein] + N(6)-[(R)-dihydrolipoyl]-L-lysyl-[protein] + 4 Fe(3+) + 2 hydrogen sulfide + 2 5'-deoxyadenosine + 2 L-methionine + 2 reduced [2Fe-2S]-[ferredoxin]. It participates in protein modification; protein lipoylation via endogenous pathway; protein N(6)-(lipoyl)lysine from octanoyl-[acyl-carrier-protein]: step 2/2. Catalyzes the radical-mediated insertion of two sulfur atoms into the C-6 and C-8 positions of the octanoyl moiety bound to the lipoyl domains of lipoate-dependent enzymes, thereby converting the octanoylated domains into lipoylated derivatives. In Chloroflexus aggregans (strain MD-66 / DSM 9485), this protein is Lipoyl synthase.